A 322-amino-acid chain; its full sequence is Phosphatidylserine decarboxylase proenzyme (322 aa).

Catalysis depends on charge relay system; for autoendoproteolytic cleavage activity residues Asp-90, His-147, and Ser-254. Residue Ser-254 is the Schiff-base intermediate with substrate; via pyruvic acid; for decarboxylase activity of the active site. Ser-254 is modified (pyruvic acid (Ser); by autocatalysis). The segment at 292 to 322 (TPDAEPSPLPAEEIEAEHDASPLVDDKKDQV) is disordered. Residues 308 to 322 (EHDASPLVDDKKDQV) show a composition bias toward basic and acidic residues.

This sequence belongs to the phosphatidylserine decarboxylase family. PSD-B subfamily. Prokaryotic type I sub-subfamily. In terms of assembly, heterodimer of a large membrane-associated beta subunit and a small pyruvoyl-containing alpha subunit. The cofactor is pyruvate. In terms of processing, is synthesized initially as an inactive proenzyme. Formation of the active enzyme involves a self-maturation process in which the active site pyruvoyl group is generated from an internal serine residue via an autocatalytic post-translational modification. Two non-identical subunits are generated from the proenzyme in this reaction, and the pyruvate is formed at the N-terminus of the alpha chain, which is derived from the carboxyl end of the proenzyme. The autoendoproteolytic cleavage occurs by a canonical serine protease mechanism, in which the side chain hydroxyl group of the serine supplies its oxygen atom to form the C-terminus of the beta chain, while the remainder of the serine residue undergoes an oxidative deamination to produce ammonia and the pyruvoyl prosthetic group on the alpha chain. During this reaction, the Ser that is part of the protease active site of the proenzyme becomes the pyruvoyl prosthetic group, which constitutes an essential element of the active site of the mature decarboxylase.

The protein resides in the cell membrane. The enzyme catalyses a 1,2-diacyl-sn-glycero-3-phospho-L-serine + H(+) = a 1,2-diacyl-sn-glycero-3-phosphoethanolamine + CO2. Its pathway is phospholipid metabolism; phosphatidylethanolamine biosynthesis; phosphatidylethanolamine from CDP-diacylglycerol: step 2/2. Functionally, catalyzes the formation of phosphatidylethanolamine (PtdEtn) from phosphatidylserine (PtdSer). The sequence is that of Phosphatidylserine decarboxylase proenzyme from Escherichia coli O7:K1 (strain IAI39 / ExPEC).